The primary structure comprises 1067 residues: Kinesin-like protein KIF11-B (1067 aa).

Positions 18–359 (NIQVVVRCRP…LDYANRAKSI (342 aa)) constitute a Kinesin motor domain. 105-112 (GQTGTGKT) is an ATP binding site. Residues 365–480 (VNQKLTKKAL…SKEQLAQESF (116 aa)) are a coiled coil. At Thr937 the chain carries Phosphothreonine; by CDK1. The residue at position 1046 (Ser1046) is a Phosphoserine; by NEK6.

The protein belongs to the TRAFAC class myosin-kinesin ATPase superfamily. Kinesin family. BimC subfamily. As to quaternary structure, heterotetramer of two heavy and two light chains. Interacts with aurka. Phosphorylation of Thr-937 during mitosis controls the association of this protein with the spindle apparatus. In terms of processing, a subset of this protein primarily localized at the spindle pole is phosphorylated by NEK6 during mitosis. Post-translationally, phosphorylated on a serine residue by aurka. In terms of tissue distribution, in unfertilized eggs, shows highest expression in the germinal vesicle and radial yolk-poor channels. Also present in testis.

Its subcellular location is the cytoplasm. It localises to the cytoskeleton. The protein resides in the spindle pole. In terms of biological role, plus end-directed motor protein required for establishing a bipolar spindle. Associates with both interphase and spindle microtubules. May be involved in nuclear divisions taking place during the development of unfertilized eggs. Required in non-mitotic cells for transport of secretory proteins from the Golgi complex to the cell surface. This is Kinesin-like protein KIF11-B (kif11-b) from Xenopus laevis (African clawed frog).